The following is a 450-amino-acid chain: Glucose-6-phosphate isomerase (450 aa).

T39 bears the Phosphothreonine mark. E291 functions as the Proton donor in the catalytic mechanism. Residues H312 and K426 contribute to the active site.

The protein belongs to the GPI family.

The protein resides in the cytoplasm. The enzyme catalyses alpha-D-glucose 6-phosphate = beta-D-fructose 6-phosphate. It functions in the pathway carbohydrate biosynthesis; gluconeogenesis. The protein operates within carbohydrate degradation; glycolysis; D-glyceraldehyde 3-phosphate and glycerone phosphate from D-glucose: step 2/4. In terms of biological role, catalyzes the reversible isomerization of glucose-6-phosphate to fructose-6-phosphate. The polypeptide is Glucose-6-phosphate isomerase (Bacillus mycoides (strain KBAB4) (Bacillus weihenstephanensis)).